Reading from the N-terminus, the 273-residue chain is MTFRNRVGLTSAGGCCCPTLMTINQNVINNDINSPCGATSPYNFDAVVANRASVNPLGFGTRNISVISPASPTYTPTIDDYTGVYLRYNGNPITRPRNYLGNNFLNGGAENIADRTFNNNCNLASRFTNNDLRGYRAVDPNGRMRMYPPVFCDRPCDPCNPYSQSDIPYASELPYGATIPTQLDYPYGAGSIYSRGSQCNIAPVPSIYNYGPPTTFDPYNGNVQAIPIGPYGTTEPNICNPGAYRPDLFYPDRYRMDPNRLDNPRTYWNRLYC.

The protein localises to the virion. This is an uncharacterized protein from Acanthamoeba polyphaga (Amoeba).